The chain runs to 195 residues: Early light-induced protein 1, chloroplastic (195 aa).

Residues 1-46 (MATASFNMQSVFAGGLTTRKINTNKLFSAGSFPNLKRNYPVGVRCM) constitute a chloroplast transit peptide. The tract at residues 46–81 (MAEGGPTNEDSSPAPSTSAAQPLPKSPSPPPPMKPK) is disordered. Over residues 56–68 (SSPAPSTSAAQPL) the composition is skewed to low complexity. Positions 69–79 (PKSPSPPPPMK) are enriched in pro residues. 3 helical membrane-spanning segments follow: residues 104-124 (LAMVGFVAALAVELSKGENVL), 131-151 (GVSWFLGTTAILTLASLVPLF), and 175-195 (FAMLGLVALAFTEFVKGGTLV).

Belongs to the ELIP/psbS family.

Its subcellular location is the plastid. It localises to the chloroplast thylakoid membrane. Prevents excess accumulation of free chlorophyll by inhibiting the entire chlorophyll biosynthesis pathway (e.g. 5-aminolevulinate synthesis and Mg-protoporphyrin IX chelatase activity), and hence prevent photooxidative stress. Probably involved in the integration of pigments into the mature light-harvesting pigment-protein complexes. Light-harvesting chlorophyll (LHC) a/b-binding protein required to ensure a high rate of chlorophyll accumulation during deetiolation in continuous high light. Involved in seed germination. May fulfill a photoprotective functions. This is Early light-induced protein 1, chloroplastic from Arabidopsis thaliana (Mouse-ear cress).